Here is a 287-residue protein sequence, read N- to C-terminus: Probable endoribonuclease YicC (287 aa).

It belongs to the YicC/YloC family. Requires a divalent metal cation as cofactor.

Functionally, probably a ssRNA endonuclease. Its function is as follows. Might contribute to small RNA (sRNA) regulation. This Salmonella typhimurium (strain LT2 / SGSC1412 / ATCC 700720) protein is Probable endoribonuclease YicC.